A 541-amino-acid polypeptide reads, in one-letter code: Sorting nexin-27 (541 aa).

Positions 1-26 are disordered; sequence MADEDGEGIHPAAPHRNGGGGGGGGS. Positions 17 to 26 are enriched in gly residues; it reads NGGGGGGGGS. The PDZ domain occupies 43–136; the sequence is VVRIVKSESG…ELILTVLSVP (94 aa). 2 positions are modified to phosphoserine: Ser-51 and Ser-62. Residues 161–269 enclose the PX domain; that stretch reads QAVPISVPTY…EFLSESDENY (109 aa). A Ras-associating domain is found at 273-362; sequence SDVELRVALP…TCLTIRKWLF (90 aa). The FERM-like region F1 stretch occupies residues 273–362; sequence SDVELRVALP…TCLTIRKWLF (90 aa). Residues 373–421 are FERM-like region F2; that stretch reads NDLAVTYFFHQAVDDVKKGYIKAEEKSYQLQKLYEQRKMVMYLNMLRTC. Positions 425 to 525 are FERM-like region F3; the sequence is NEIIFPHCAC…RVFCELKWRK (101 aa).

Core component of the SNX27-retromer, a multiprotein complex composed of SNX27, the WASH complex and the retromer complex. Interacts (via PDZ domain) with a number of target transmembrane proteins (via PDZ-binding motif): ABCC4, ADRB2, ARHGEF7, GRIA1, GRIA2, GRIN1, GRIN2A GRIN2C, KCNJ6, KCNJ9 and SLC2A1/GLUT1. Interacts (via the FERM-like regions) with the WASH complex. Interacts with SNX1. Interacts with CYTIP. Interacts with DGKZ. Interacts with MCC. Interacts (via PDZ domains) with SLC9A3; directs SLC9A3 membrane insertion from early endosomes to the plasma membrane.

The protein localises to the early endosome membrane. The protein resides in the cytoplasm. It is found in the cytosol. In terms of biological role, involved in the retrograde transport from endosome to plasma membrane, a trafficking pathway that promotes the recycling of internalized transmembrane proteins. Following internalization, endocytosed transmembrane proteins are delivered to early endosomes and recycled to the plasma membrane instead of being degraded in lysosomes. SNX27 specifically binds and directs sorting of a subset of transmembrane proteins containing a PDZ-binding motif at the C-terminus: following interaction with target transmembrane proteins, associates with the retromer complex, preventing entry into the lysosomal pathway, and promotes retromer-tubule based plasma membrane recycling. SNX27 also binds with the WASH complex. Interacts with membranes containing phosphatidylinositol-3-phosphate (PtdIns(3P)). May participate in establishment of natural killer cell polarity. Recruits CYTIP to early endosomes. The chain is Sorting nexin-27 (SNX27) from Bos taurus (Bovine).